The following is a 188-amino-acid chain: ATP-dependent protease subunit HslV (188 aa).

Threonine 14 is a catalytic residue. Alanine 173, cysteine 176, and threonine 179 together coordinate Na(+).

This sequence belongs to the peptidase T1B family. HslV subfamily. A double ring-shaped homohexamer of HslV is capped on each side by a ring-shaped HslU homohexamer. The assembly of the HslU/HslV complex is dependent on binding of ATP.

The protein resides in the cytoplasm. It carries out the reaction ATP-dependent cleavage of peptide bonds with broad specificity.. Allosterically activated by HslU binding. Protease subunit of a proteasome-like degradation complex believed to be a general protein degrading machinery. The chain is ATP-dependent protease subunit HslV from Caulobacter vibrioides (strain ATCC 19089 / CIP 103742 / CB 15) (Caulobacter crescentus).